A 522-amino-acid chain; its full sequence is 2-isopropylmalate synthase (522 aa).

In terms of domain architecture, Pyruvate carboxyltransferase spans 5–267 (VIIFDTTLRD…ETGINAKEIH (263 aa)). 4 residues coordinate Mn(2+): Asp-14, His-202, His-204, and Asn-238. A regulatory domain region spans residues 392–522 (QLQQLVVQSD…MQKNRELGGV (131 aa)).

This sequence belongs to the alpha-IPM synthase/homocitrate synthase family. LeuA type 1 subfamily. As to quaternary structure, homodimer. The cofactor is Mn(2+).

The protein localises to the cytoplasm. The enzyme catalyses 3-methyl-2-oxobutanoate + acetyl-CoA + H2O = (2S)-2-isopropylmalate + CoA + H(+). Its pathway is amino-acid biosynthesis; L-leucine biosynthesis; L-leucine from 3-methyl-2-oxobutanoate: step 1/4. Catalyzes the condensation of the acetyl group of acetyl-CoA with 3-methyl-2-oxobutanoate (2-ketoisovalerate) to form 3-carboxy-3-hydroxy-4-methylpentanoate (2-isopropylmalate). This Shewanella baltica (strain OS195) protein is 2-isopropylmalate synthase.